The sequence spans 234 residues: Large ribosomal subunit protein uL1 (234 aa).

This sequence belongs to the universal ribosomal protein uL1 family. In terms of assembly, part of the 50S ribosomal subunit.

In terms of biological role, binds directly to 23S rRNA. The L1 stalk is quite mobile in the ribosome, and is involved in E site tRNA release. Its function is as follows. Protein L1 is also a translational repressor protein, it controls the translation of the L11 operon by binding to its mRNA. In Maridesulfovibrio salexigens (strain ATCC 14822 / DSM 2638 / NCIMB 8403 / VKM B-1763) (Desulfovibrio salexigens), this protein is Large ribosomal subunit protein uL1.